A 213-amino-acid polypeptide reads, in one-letter code: Endoplasmic reticulum vesicle protein 25 (213 aa).

A signal peptide spans 1 to 20 (MILRIPSLLYLFTLLTAVYA). At 21–181 (VKFDLTSDRN…TNESTNQRVK (161 aa)) the chain is on the lumenal side. The region spanning 33 to 122 (PSIIWNFASA…VRSVELDVDI (90 aa)) is the GOLD domain. Residues 182–202 (VFSVLIICCTIGLGVWQLLHL) form a helical membrane-spanning segment. Residues 203–213 (RSFFKRKYLID) lie on the Cytoplasmic side of the membrane.

This sequence belongs to the EMP24/GP25L family.

The protein resides in the endoplasmic reticulum membrane. Its subcellular location is the golgi apparatus membrane. Functionally, constituent of COPII-coated endoplasmic reticulum-derived transport vesicles. Required for efficient transport of a subset of secretory proteins to the Golgi. Facilitates retrograde transport from the Golgi to the endoplasmic reticulum. The chain is Endoplasmic reticulum vesicle protein 25 (ERV25) from Cryptococcus neoformans var. neoformans serotype D (strain B-3501A) (Filobasidiella neoformans).